We begin with the raw amino-acid sequence, 231 residues long: DNA mismatch repair protein MutH (231 aa).

It belongs to the MutH family.

The protein resides in the cytoplasm. In terms of biological role, sequence-specific endonuclease that cleaves unmethylated GATC sequences. It is involved in DNA mismatch repair. The sequence is that of DNA mismatch repair protein MutH from Pectobacterium atrosepticum (strain SCRI 1043 / ATCC BAA-672) (Erwinia carotovora subsp. atroseptica).